A 207-amino-acid chain; its full sequence is Large ribosomal subunit protein uL4 (207 aa).

The segment at 49–78 (HAVKNRSAVSGGGRKPWRQKGTGRARQGSI) is disordered.

This sequence belongs to the universal ribosomal protein uL4 family. In terms of assembly, part of the 50S ribosomal subunit.

One of the primary rRNA binding proteins, this protein initially binds near the 5'-end of the 23S rRNA. It is important during the early stages of 50S assembly. It makes multiple contacts with different domains of the 23S rRNA in the assembled 50S subunit and ribosome. In terms of biological role, forms part of the polypeptide exit tunnel. The protein is Large ribosomal subunit protein uL4 of Streptococcus gordonii (strain Challis / ATCC 35105 / BCRC 15272 / CH1 / DL1 / V288).